Reading from the N-terminus, the 269-residue chain is Dynein regulatory complex protein 8 (269 aa).

The tract at residues M1–S113 is disordered. Over residues A54 to A76 the composition is skewed to low complexity. EF-hand domains lie at E150 to C185 and I228 to V263.

Belongs to the DRC8 family. In terms of assembly, component of the nexin-dynein regulatory complex (N-DRC).

The protein localises to the cytoplasm. It localises to the cytoskeleton. Its subcellular location is the flagellum axoneme. In terms of biological role, component of the nexin-dynein regulatory complex (N-DRC), a key regulator of ciliary/flagellar motility which maintains the alignment and integrity of the distal axoneme and regulates microtubule sliding in motile axonemes. This Homo sapiens (Human) protein is Dynein regulatory complex protein 8 (EFCAB2).